Here is a 106-residue protein sequence, read N- to C-terminus: uncharacterized protein (106 aa).

A signal peptide spans 1–25 (MSVIKKNIPAIGLCICAFFIHSAVG).

The protein to the N-terminal of the FimA/PapA family of fimbria proteins.

This is an uncharacterized protein from Salmonella typhi.